We begin with the raw amino-acid sequence, 592 residues long: Bifunctional purine biosynthesis protein ATIC (592 aa).

The residue at position 1 (M1) is an N-acetylmethionine. Positions 1 to 146 (MAPGHLALFS…KNHARVTVVC (146 aa)) constitute an MGS-like domain. An IMP cyclohydrolase region spans residues 1–198 (MAPGHLALFS…ISDYFRKQYS (198 aa)). IMP is bound by residues 12-14 (SDK), 34-37 (SGGT), 64-67 (RVKT), 101-102 (CN), and 125-126 (DI). The active-site Proton donor/acceptor; for FAICAR cyclization activity is K137. K199 carries the N6-acetyllysine modification. The tract at residues 199 to 592 (KGISQMPLRY…AHTNLRLFHH (394 aa)) is AICAR formyltransferase. Residues 207 to 208 (RY), H267, G316, D339, N431, and R451 each bind 5-amino-1-(5-phospho-beta-D-ribosyl)imidazole-4-carboxamide. The active-site Proton acceptor; for AICAR formyltransferase activity is H267. Position 452 (I452) interacts with (6R)-10-formyltetrahydrofolate. F541 contributes to the 5-amino-1-(5-phospho-beta-D-ribosyl)imidazole-4-carboxamide binding site. Residues D546 and 565–566 (SA) contribute to the (6R)-10-formyltetrahydrofolate site. Residue R588 coordinates 5-amino-1-(5-phospho-beta-D-ribosyl)imidazole-4-carboxamide.

This sequence belongs to the PurH family. Homodimer. Associates with internalized INSR complexes on Golgi/endosomal membranes. Interacts with INSR; ATIC together with PRKAA2/AMPK2 and HACD3/PTPLAD1 is proposed to be part of a signaling network regulating INSR autophosphorylation and endocytosis.

The protein resides in the cytoplasm. The protein localises to the cytosol. It catalyses the reaction (6R)-10-formyltetrahydrofolate + 5-amino-1-(5-phospho-beta-D-ribosyl)imidazole-4-carboxamide = 5-formamido-1-(5-phospho-D-ribosyl)imidazole-4-carboxamide + (6S)-5,6,7,8-tetrahydrofolate. The catalysed reaction is 10-formyldihydrofolate + 5-amino-1-(5-phospho-beta-D-ribosyl)imidazole-4-carboxamide = 5-formamido-1-(5-phospho-D-ribosyl)imidazole-4-carboxamide + 7,8-dihydrofolate. It carries out the reaction IMP + H2O = 5-formamido-1-(5-phospho-D-ribosyl)imidazole-4-carboxamide. The protein operates within purine metabolism; IMP biosynthesis via de novo pathway; 5-formamido-1-(5-phospho-D-ribosyl)imidazole-4-carboxamide from 5-amino-1-(5-phospho-D-ribosyl)imidazole-4-carboxamide (10-formyl THF route): step 1/1. Its pathway is purine metabolism; IMP biosynthesis via de novo pathway; IMP from 5-formamido-1-(5-phospho-D-ribosyl)imidazole-4-carboxamide: step 1/1. AMP and XMP inhibit AICAR formyltransferase activity. Bifunctional enzyme that catalyzes the last two steps of purine biosynthesis. Acts as a transformylase that incorporates a formyl group to the AMP analog AICAR (5-amino-1-(5-phospho-beta-D-ribosyl)imidazole-4-carboxamide) to produce the intermediate formyl-AICAR (FAICAR). Can use both 10-formyldihydrofolate and 10-formyltetrahydrofolate as the formyl donor in this reaction. Also catalyzes the cyclization of FAICAR to inosine monophosphate (IMP). Promotes insulin receptor/INSR autophosphorylation and is involved in INSR internalization. This Pongo abelii (Sumatran orangutan) protein is Bifunctional purine biosynthesis protein ATIC (ATIC).